We begin with the raw amino-acid sequence, 48 residues long: Small polypeptide DEVIL 14 (48 aa).

Residues 4 to 23 form a helical membrane-spanning segment; that stretch reads TVVLRCCTSVTKVRTWKRCS. The segment at 17 to 48 is required for DVL/RTFL small polypeptide activity; it reads RTWKRCSKQIKEQRARLYIIWKCAVFLLSSHD.

Belongs to the DVL/RTFL small polypeptides family.

The protein localises to the cell membrane. Small polypeptide acting as a regulatory molecule which coordinates cellular responses required for differentiation, growth and development, probably by restricting polar cell proliferation in lateral organs and coordinating socket cell recruitment and differentiation at trichome sites. In Arabidopsis thaliana (Mouse-ear cress), this protein is Small polypeptide DEVIL 14.